The primary structure comprises 589 residues: Lipoprotein LpqB (589 aa).

The first 20 residues, Met-1–Gly-20, serve as a signal peptide directing secretion. Cys-21 is lipidated: N-palmitoyl cysteine. Cys-21 is lipidated: S-diacylglycerol cysteine.

This sequence belongs to the LpqB lipoprotein family.

It localises to the cell membrane. The sequence is that of Lipoprotein LpqB from Mycobacterium leprae (strain TN).